Consider the following 291-residue polypeptide: Taste receptor type 2 member 16 (291 aa).

Position 1 (M1) is a topological domain, extracellular. Residues 2–22 (IPIQLTVFFMIIYVLESLTII) traverse the membrane as a helical segment. At 23-41 (VQSSLIVAVLGREWLQVRR) the chain is on the cytoplasmic side. The helical transmembrane segment at 42 to 62 (LMPVDMILISLGISRFCLQWA) threads the bilayer. Topologically, residues 63–84 (SMLNNFCSYFNLNYVLCNLTIT) are extracellular. N80 is a glycosylation site (N-linked (GlcNAc...) asparagine). The helical transmembrane segment at 85–105 (WEFFNILTFWLNSLLTVFYCI) threads the bilayer. Residues 106 to 125 (KVSSFTHHIFLWLRWRILRL) are Cytoplasmic-facing. The helical transmembrane segment at 126–146 (FPWILLGSLMITCVTIIPSAI) threads the bilayer. The Extracellular portion of the chain corresponds to 147-182 (GNYIQIQLLTMEHLPRNSTVTDKLENFHQYQFQAHT). N163 is a glycosylation site (N-linked (GlcNAc...) asparagine). Residues 183–203 (VALVIPFILFLASTIFLMASL) form a helical membrane-spanning segment. Residues 204–228 (TKQIQHHSTGHCNPSMKARFTALRS) are Cytoplasmic-facing. The chain crosses the membrane as a helical span at residues 229–249 (LAVLFIVFTSYFLTILITIIG). The Extracellular segment spans residues 250 to 257 (TLFDKRCW). The chain crosses the membrane as a helical span at residues 258–278 (LWVWEAFVYAFILMHSTSLML). Residues 279–291 (SSPTLKRILKGKC) are Cytoplasmic-facing.

The protein belongs to the G-protein coupled receptor T2R family. Interacts with RTP3 and RTP4. As to expression, expressed in a subset of gustducin-positive taste receptor cells of the tongue. Expressed in circumvallate papillae and testis.

Its subcellular location is the cell membrane. Gustducin-coupled receptor implicated in the perception of bitter compounds in the oral cavity and the gastrointestinal tract. Signals through PLCB2 and the calcium-regulated cation channel TRPM5. This Homo sapiens (Human) protein is Taste receptor type 2 member 16 (TAS2R16).